Consider the following 106-residue polypeptide: Nucleoid-associated protein XAC1110 (106 aa).

Residues 80–89 are compositionally biased toward basic and acidic residues; sequence KIDAESKDRM. The segment at 80-106 is disordered; sequence KIDAESKDRMGSATAGMQLPPGMKLPF.

It belongs to the YbaB/EbfC family. Homodimer.

The protein localises to the cytoplasm. It localises to the nucleoid. Functionally, binds to DNA and alters its conformation. May be involved in regulation of gene expression, nucleoid organization and DNA protection. The sequence is that of Nucleoid-associated protein XAC1110 from Xanthomonas axonopodis pv. citri (strain 306).